Consider the following 495-residue polypeptide: Amorpha-4,11-diene 12-monooxygenase (495 aa).

At 1-6 the chain is on the cytoplasmic side; it reads MKSILK. Residues 7–29 traverse the membrane as a helical; Signal-anchor for type II membrane protein segment; that stretch reads AMALSLTTSIALATILLFVYKFA. Residues 30–495 are Lumenal-facing; that stretch reads TRSKSTKKSL…KTELLLVPSF (466 aa). N-linked (GlcNAc...) asparagine glycosylation is found at Asn-176, Asn-261, Asn-267, Asn-386, and Asn-417. Heme is bound at residue Cys-439.

Belongs to the cytochrome P450 family. Heme serves as cofactor. In terms of tissue distribution, highly expressed both in apical and sub-apical cells of glandular secretory trichomes. Detected in flower buds, leaves and roots. Also present in non-glandular trichome cells.

The protein localises to the endoplasmic reticulum membrane. It catalyses the reaction (+)-amorpha-4,11-diene + 3 reduced [NADPH--hemoprotein reductase] + 3 O2 = (+)-artemisinate + 3 oxidized [NADPH--hemoprotein reductase] + 4 H2O + 4 H(+). Its pathway is sesquiterpene biosynthesis. Functionally, involved in the biosynthesis of the antimalarial endoperoxide artemisinin. Catalyzes three consecutive oxidations of amorpha-4,11-diene to produce artemisinic acid, with artemisinic alcohol and artemisinic aldehyde as intermediates products, but is unable to oxidize germacrene A. No activity with limonene, alpha-pinene, beta-pinene, pinocarveol, (-)-alloisolongifolene, caryophyllene, (-)-alpha-gurjunene, (+)-gamma-gurjunene, (+)-ledene, (+)-beta-selinene and (+)-valencene as substrates. In Artemisia annua (Sweet wormwood), this protein is Amorpha-4,11-diene 12-monooxygenase.